The primary structure comprises 968 residues: C-1-tetrahydrofolate synthase, cytoplasmic (968 aa).

A methylenetetrahydrofolate dehydrogenase and cyclohydrolase region spans residues 1–338 (MSAQYQRFLK…ERLAKSQWAL (338 aa)). Substrate is bound by residues 86 to 90 (YIRMK) and 133 to 135 (VQM). Residues 205–207 (GRS) and Ser-230 contribute to the NADP(+) site. 305-309 (PGGVG) is a binding site for substrate. Positions 339–968 (QTLPLKPQRP…TETGEIEGLF (630 aa)) are formyltetrahydrofolate synthetase. 413 to 420 (TPLGEGKT) is a binding site for ATP.

It in the N-terminal section; belongs to the tetrahydrofolate dehydrogenase/cyclohydrolase family. The protein in the C-terminal section; belongs to the formate--tetrahydrofolate ligase family. In terms of assembly, homodimer. Present in all tissues.

The protein localises to the cytoplasm. It catalyses the reaction (6R)-5,10-methylene-5,6,7,8-tetrahydrofolate + NADP(+) = (6R)-5,10-methenyltetrahydrofolate + NADPH. The catalysed reaction is (6R)-5,10-methenyltetrahydrofolate + H2O = (6R)-10-formyltetrahydrofolate + H(+). It carries out the reaction (6S)-5,6,7,8-tetrahydrofolate + formate + ATP = (6R)-10-formyltetrahydrofolate + ADP + phosphate. Its pathway is one-carbon metabolism; tetrahydrofolate interconversion. The chain is C-1-tetrahydrofolate synthase, cytoplasmic (pug) from Drosophila melanogaster (Fruit fly).